The primary structure comprises 190 residues: MTKLENPVLMATIGAAQGLRGEVRARAFTSDPTALGDYGHLHSMDGRIFEVLEIREAKNVVIVRFRGVNNRDAAEALNGLELYIERDNLPDDELEDDEFFYTDLEGLEAVDDKGTAYGTVSGVYDFGAGDLLELKGPGKRPVLIPFSEAAVLEIDLEGGKILIDPMAAGLIDSPDDLTGKPPKPPGKTKE.

Residues 95–177 (EDDEFFYTDL…AGLIDSPDDL (83 aa)) enclose the PRC barrel domain. Residues 170–190 (LIDSPDDLTGKPPKPPGKTKE) form a disordered region. Over residues 181–190 (PPKPPGKTKE) the composition is skewed to pro residues.

Belongs to the RimM family. As to quaternary structure, binds ribosomal protein uS19.

The protein localises to the cytoplasm. Functionally, an accessory protein needed during the final step in the assembly of 30S ribosomal subunit, possibly for assembly of the head region. Essential for efficient processing of 16S rRNA. May be needed both before and after RbfA during the maturation of 16S rRNA. It has affinity for free ribosomal 30S subunits but not for 70S ribosomes. The chain is Ribosome maturation factor RimM from Rhizobium rhizogenes (strain K84 / ATCC BAA-868) (Agrobacterium radiobacter).